Consider the following 406-residue polypeptide: Probable tRNA pseudouridine synthase D (406 aa).

Asp-77 acts as the Nucleophile in catalysis. A TRUD domain is found at 150-371; that stretch reads GFPNYFGIQR…PGGRRELLIK (222 aa).

Belongs to the pseudouridine synthase TruD family.

The enzyme catalyses uridine(13) in tRNA = pseudouridine(13) in tRNA. Could be responsible for synthesis of pseudouridine from uracil-13 in transfer RNAs. The sequence is that of Probable tRNA pseudouridine synthase D from Pyrococcus abyssi (strain GE5 / Orsay).